The primary structure comprises 444 residues: Sensor protein CiaH (444 aa).

A run of 2 helical transmembrane segments spans residues 21-41 (FGVFTLIFSTMTLIILQVMHS) and 183-203 (LIVVVMASFWILSLLASLYLA). A Histidine kinase domain is found at 223–438 (NASHELRTPL…IFEVKIAIQT (216 aa)). At H226 the chain carries Phosphohistidine; by autocatalysis.

It is found in the cell membrane. The enzyme catalyses ATP + protein L-histidine = ADP + protein N-phospho-L-histidine.. Functionally, member of the two-component regulatory system CiaH/CiaR. Involved in early steps of competence regulation and in penicillin susceptibility. Probably phosphorylates CiaR. The chain is Sensor protein CiaH (ciaH) from Streptococcus pneumoniae serotype 4 (strain ATCC BAA-334 / TIGR4).